The sequence spans 148 residues: Sporulation inhibitor of replication protein SirA (148 aa).

Belongs to the SirA family. Interacts with DnaA. Forms a 1:1 complex with domain I of DnaA.

The protein resides in the cytoplasm. Its function is as follows. Inhibits DNA replication initiation during sporulation, preventing overinitiation and thus enforcing diploidy; probably the main regulator of sporulation replication initiation under Spo0A control. During sporulation SirA prevents DnaA association with the replication origin to prevent excessive chromosome replication. Alternatively SirA binds to domain I of DnaA and prevent its interaction with DnaD, preventing DNA replication initiation. Upon ectopic expression during vegetative growth reduces chromosome copy number, leading to elongated cells with that can have a single nucleoid or be anucleate. Ectopic expression during vegetative growth blocks DnaA at oriC while blocking recruitment of DnaD to oriC. Plays a significant role during the onset of sporulation. The polypeptide is Sporulation inhibitor of replication protein SirA (Bacillus subtilis (strain 168)).